A 129-amino-acid polypeptide reads, in one-letter code: Trefoil factor 2 (129 aa).

The signal sequence occupies residues 1–23 (MGPRGLQLLAVLLALGLCAPAGA). Pyrrolidone carboxylic acid is present on Q24. 2 P-type domains span residues 29–73 (CQCS…FHPL) and 79–122 (EQCV…FFPI). 7 disulfides stabilise this stretch: C29/C127, C31/C58, C42/C57, C52/C69, C81/C107, C91/C106, and C101/C118.

Its subcellular location is the secreted. Functionally, inhibits gastrointestinal motility and gastric acid secretion. Could function as a structural component of gastric mucus, possibly by stabilizing glycoproteins in the mucus gel through interactions with carbohydrate side chains. This Canis lupus familiaris (Dog) protein is Trefoil factor 2 (TFF2).